The sequence spans 238 residues: Glyceraldehyde 3-phosphate phosphatase (238 aa).

Belongs to the HAD-like hydrolase superfamily. The cofactor is Mg(2+).

Catalyzes the dephosphorylation of D,L-glyceraldehyde 3-phosphate in vitro. The protein is Glyceraldehyde 3-phosphate phosphatase of Pyrococcus abyssi (strain GE5 / Orsay).